Here is a 214-residue protein sequence, read N- to C-terminus: Large ribosomal subunit protein uL6m (214 aa).

The N-terminal 16 residues, 1-16, are a transit peptide targeting the mitochondrion; sequence MSFIQRRLLSQTLFLR.

The protein belongs to the universal ribosomal protein uL6 family. In terms of assembly, component of the mitochondrial large ribosomal subunit (mt-LSU). Mature yeast 74S mitochondrial ribosomes consist of a small (37S) and a large (54S) subunit. The 37S small subunit contains a 15S ribosomal RNA (15S mt-rRNA) and 34 different proteins. The 54S large subunit contains a 21S rRNA (21S mt-rRNA) and 46 different proteins.

It is found in the mitochondrion. Component of the mitochondrial ribosome (mitoribosome), a dedicated translation machinery responsible for the synthesis of mitochondrial genome-encoded proteins, including at least some of the essential transmembrane subunits of the mitochondrial respiratory chain. The mitoribosomes are attached to the mitochondrial inner membrane and translation products are cotranslationally integrated into the membrane. This is Large ribosomal subunit protein uL6m (MRPL6) from Saccharomyces cerevisiae (strain ATCC 204508 / S288c) (Baker's yeast).